Consider the following 169-residue polypeptide: Peptide methionine sulfoxide reductase MsrA (169 aa).

Cys10 is an active-site residue.

Belongs to the MsrA Met sulfoxide reductase family.

It catalyses the reaction L-methionyl-[protein] + [thioredoxin]-disulfide + H2O = L-methionyl-(S)-S-oxide-[protein] + [thioredoxin]-dithiol. The enzyme catalyses [thioredoxin]-disulfide + L-methionine + H2O = L-methionine (S)-S-oxide + [thioredoxin]-dithiol. Functionally, has an important function as a repair enzyme for proteins that have been inactivated by oxidation. Catalyzes the reversible oxidation-reduction of methionine sulfoxide in proteins to methionine. This chain is Peptide methionine sulfoxide reductase MsrA, found in Streptococcus uberis (strain ATCC BAA-854 / 0140J).